Consider the following 753-residue polypeptide: 5-methyltetrahydropteroyltriglutamate--homocysteine methyltransferase (753 aa).

5-methyltetrahydropteroyltri-L-glutamate is bound by residues 17 to 20 (RELK) and Lys-117. Residues 431–433 (IGS) and Glu-484 each bind L-homocysteine. L-methionine is bound by residues 431–433 (IGS) and Glu-484. Residues 515–516 (RC) and Trp-561 each bind 5-methyltetrahydropteroyltri-L-glutamate. Position 599 (Asp-599) interacts with L-homocysteine. Asp-599 is an L-methionine binding site. Position 605 (Glu-605) interacts with 5-methyltetrahydropteroyltri-L-glutamate. Zn(2+) contacts are provided by His-641, Cys-643, and Glu-665. His-694 serves as the catalytic Proton donor. Cys-726 is a binding site for Zn(2+).

It belongs to the vitamin-B12 independent methionine synthase family. Zn(2+) serves as cofactor.

It carries out the reaction 5-methyltetrahydropteroyltri-L-glutamate + L-homocysteine = tetrahydropteroyltri-L-glutamate + L-methionine. It functions in the pathway amino-acid biosynthesis; L-methionine biosynthesis via de novo pathway; L-methionine from L-homocysteine (MetE route): step 1/1. In terms of biological role, catalyzes the transfer of a methyl group from 5-methyltetrahydrofolate to homocysteine resulting in methionine formation. The polypeptide is 5-methyltetrahydropteroyltriglutamate--homocysteine methyltransferase (Citrobacter koseri (strain ATCC BAA-895 / CDC 4225-83 / SGSC4696)).